A 330-amino-acid chain; its full sequence is Aspartate--ammonia ligase (330 aa).

It belongs to the class-II aminoacyl-tRNA synthetase family. AsnA subfamily.

The protein localises to the cytoplasm. It catalyses the reaction L-aspartate + NH4(+) + ATP = L-asparagine + AMP + diphosphate + H(+). Its pathway is amino-acid biosynthesis; L-asparagine biosynthesis; L-asparagine from L-aspartate (ammonia route): step 1/1. The protein is Aspartate--ammonia ligase of Haemophilus influenzae (strain ATCC 51907 / DSM 11121 / KW20 / Rd).